Reading from the N-terminus, the 375-residue chain is Methylthioribose-1-phosphate isomerase (375 aa).

The active-site Proton donor is aspartate 259.

Belongs to the eIF-2B alpha/beta/delta subunits family. MtnA subfamily.

The protein localises to the cytoplasm. Its subcellular location is the nucleus. It catalyses the reaction 5-(methylsulfanyl)-alpha-D-ribose 1-phosphate = 5-(methylsulfanyl)-D-ribulose 1-phosphate. It functions in the pathway amino-acid biosynthesis; L-methionine biosynthesis via salvage pathway; L-methionine from S-methyl-5-thio-alpha-D-ribose 1-phosphate: step 1/6. Functionally, catalyzes the interconversion of methylthioribose-1-phosphate (MTR-1-P) into methylthioribulose-1-phosphate (MTRu-1-P). This Populus trichocarpa (Western balsam poplar) protein is Methylthioribose-1-phosphate isomerase.